The chain runs to 221 residues: Large ribosomal subunit protein uL4 (221 aa).

The interval 45–100 (ARQGTHKTKNRGEVSGAGRKPFKQKGTGRARQGSIRAPQMTGGGIVHGPTPRDYSQ) is disordered.

This sequence belongs to the universal ribosomal protein uL4 family. As to quaternary structure, part of the 50S ribosomal subunit.

One of the primary rRNA binding proteins, this protein initially binds near the 5'-end of the 23S rRNA. It is important during the early stages of 50S assembly. It makes multiple contacts with different domains of the 23S rRNA in the assembled 50S subunit and ribosome. In terms of biological role, forms part of the polypeptide exit tunnel. The chain is Large ribosomal subunit protein uL4 from Leifsonia xyli subsp. xyli (strain CTCB07).